Reading from the N-terminus, the 79-residue chain is uncharacterized protein (79 aa).

A signal peptide spans 1 to 24 (MNKFLNLIGLAFVLVLCAFSCSNA). The 47-residue stretch at 32-78 (SWHVAQKGYTCYDMATSCKVTLDQFMRTNKLDNNACKLVQIGRKYCC) folds into the LysM domain.

The protein localises to the secreted. This is an uncharacterized protein from Dictyostelium discoideum (Social amoeba).